We begin with the raw amino-acid sequence, 348 residues long: NADH-ubiquinone oxidoreductase chain 2 (348 aa).

The next 11 helical transmembrane spans lie at 1–21, 23–43, 56–76, 92–112, 123–143, 148–168, 176–196, 198–218, 242–262, 272–292, and 321–341; these read MMTL…MFSS, WFFA…MMLF, YFIS…WNYF, ITLI…HFWL, MGLI…IQVS, NMYI…FGGL, LLAY…AVSA, LSWV…TILI, CILV…FLKL, SLIL…FFYL, and LLFN…PFMI.

The protein belongs to the complex I subunit 2 family.

It is found in the mitochondrion inner membrane. The catalysed reaction is a ubiquinone + NADH + 5 H(+)(in) = a ubiquinol + NAD(+) + 4 H(+)(out). Its function is as follows. Core subunit of the mitochondrial membrane respiratory chain NADH dehydrogenase (Complex I) that is believed to belong to the minimal assembly required for catalysis. Complex I functions in the transfer of electrons from NADH to the respiratory chain. The immediate electron acceptor for the enzyme is believed to be ubiquinone. The chain is NADH-ubiquinone oxidoreductase chain 2 (MT-ND2) from Myxine glutinosa (Atlantic hagfish).